The sequence spans 39 residues: Alpha-conotoxin ArIA (39 aa).

Residues 1-17 constitute a propeptide that is removed on maturation; it reads SDGRNVAAKAFHRIGRT. 2 disulfides stabilise this stretch: C22–C28 and C23–C36. Residues 24–26 form a ser-Xaa-Pro motif, crucial for potent interaction with nAChR region; it reads SNP. P33 bears the 4-hydroxyproline; in ArIA mark.

The protein belongs to the conotoxin A superfamily. Expressed by the venom duct.

The protein localises to the secreted. Functionally, alpha-conotoxins act on postsynaptic membranes, they bind to the nicotinic acetylcholine receptors (nAChR) and thus inhibit them. This toxin acts as a competitive inhibitor and is 3-fold more potent on alpha-7/CHRNA7 nAChRs (IC(50)=6 nM) than on alpha-3-beta-2/CHRNA3-CHRNB2 nAChR (IC(50)=18 nM). Acts as a competitive inhibitor and is 33-fold more potent on alpha-7/CHRNA7 nAChRs (IC(50)=1.8 nM) than on alpha-3-beta-2/CHRNA3-CHRNB2 nAChR (IC(50)=60.1 nM). The chain is Alpha-conotoxin ArIA from Conus arenatus (Sand-dusted cone).